We begin with the raw amino-acid sequence, 164 residues long: UPF0304 protein PC1_2778 (164 aa).

The protein belongs to the UPF0304 family.

This chain is UPF0304 protein PC1_2778, found in Pectobacterium carotovorum subsp. carotovorum (strain PC1).